Reading from the N-terminus, the 296-residue chain is Ribosomal RNA small subunit methyltransferase A (296 aa).

S-adenosyl-L-methionine contacts are provided by Asn-31, Leu-33, Gly-58, Glu-79, Asp-104, and Asn-129.

Belongs to the class I-like SAM-binding methyltransferase superfamily. rRNA adenine N(6)-methyltransferase family. RsmA subfamily.

The protein resides in the cytoplasm. The enzyme catalyses adenosine(1518)/adenosine(1519) in 16S rRNA + 4 S-adenosyl-L-methionine = N(6)-dimethyladenosine(1518)/N(6)-dimethyladenosine(1519) in 16S rRNA + 4 S-adenosyl-L-homocysteine + 4 H(+). Specifically dimethylates two adjacent adenosines (A1518 and A1519) in the loop of a conserved hairpin near the 3'-end of 16S rRNA in the 30S particle. May play a critical role in biogenesis of 30S subunits. This chain is Ribosomal RNA small subunit methyltransferase A, found in Shouchella clausii (strain KSM-K16) (Alkalihalobacillus clausii).